The chain runs to 184 residues: UPF0149 protein PputW619_5026 (184 aa).

It belongs to the UPF0149 family.

The sequence is that of UPF0149 protein PputW619_5026 from Pseudomonas putida (strain W619).